Consider the following 540-residue polypeptide: Putative laccase-11 (540 aa).

Plastocyanin-like domains are found at residues 1–114, 124–279, and 389–523; these read MATV…PPRG, REVP…YYGA, and NFPA…NDGP. Residues His48, His50, His93, and His95 each coordinate Cu cation. Cu cation is bound by residues His440, His443, His445, His502, Cys503, His504, and His508.

The protein belongs to the multicopper oxidase family. Requires Cu cation as cofactor.

It is found in the secreted. The protein resides in the extracellular space. It localises to the apoplast. The catalysed reaction is 4 hydroquinone + O2 = 4 benzosemiquinone + 2 H2O. In terms of biological role, lignin degradation and detoxification of lignin-derived products. The polypeptide is Putative laccase-11 (LAC11) (Oryza sativa subsp. japonica (Rice)).